A 101-amino-acid chain; its full sequence is Integration host factor subunit alpha (101 aa).

The tract at residues 49–70 (FGNFQLRDKPQRPGRNPKTGEE) is disordered.

This sequence belongs to the bacterial histone-like protein family. In terms of assembly, heterodimer of an alpha and a beta chain.

In terms of biological role, this protein is one of the two subunits of integration host factor, a specific DNA-binding protein that functions in genetic recombination as well as in transcriptional and translational control. The polypeptide is Integration host factor subunit alpha (Nitrosospira multiformis (strain ATCC 25196 / NCIMB 11849 / C 71)).